The primary structure comprises 311 residues: Aquaporin NIP3-1 (311 aa).

Residues 1 to 34 (MEMAAPNGGGAAGMSSPVNGASAPATPGTPAPLF) are disordered. Residues 20–34 (GASAPATPGTPAPLF) show a composition bias toward low complexity. Transmembrane regions (helical) follow at residues 85 to 105 (LGAE…APIV) and 111 to 131 (GAIS…TIIL). The NPA 1 signature appears at 142–144 (NPS). The next 3 membrane-spanning stretches (helical) occupy residues 158-178 (LQVP…GFAL), 202-222 (AFFT…AVAT), and 226-246 (AVGE…ILIA). Residues 255 to 257 (NPV) carry the NPA 2 motif. A helical membrane pass occupies residues 273 to 293 (WIYLIAPTLGAVAGAGVYTAV).

This sequence belongs to the MIP/aquaporin (TC 1.A.8) family. NIP (TC 1.A.8.12) subfamily. In terms of tissue distribution, expressed in roots and leaves.

It is found in the membrane. In terms of biological role, aquaporins facilitate the transport of water and small neutral solutes across cell membranes. This is Aquaporin NIP3-1 (NIP3-1) from Oryza sativa subsp. japonica (Rice).